We begin with the raw amino-acid sequence, 232 residues long: 7-cyano-7-deazaguanine synthase (232 aa).

8-18 (FSGGQDSTTCL) provides a ligand contact to ATP. Positions 187, 196, 199, and 202 each coordinate Zn(2+).

This sequence belongs to the QueC family. Zn(2+) is required as a cofactor.

The catalysed reaction is 7-carboxy-7-deazaguanine + NH4(+) + ATP = 7-cyano-7-deazaguanine + ADP + phosphate + H2O + H(+). It functions in the pathway purine metabolism; 7-cyano-7-deazaguanine biosynthesis. Its function is as follows. Catalyzes the ATP-dependent conversion of 7-carboxy-7-deazaguanine (CDG) to 7-cyano-7-deazaguanine (preQ(0)). The chain is 7-cyano-7-deazaguanine synthase from Photobacterium profundum (strain SS9).